A 201-amino-acid chain; its full sequence is Putative amino-acid transporter Mb0498 (201 aa).

The next 5 membrane-spanning stretches (helical) occupy residues 25–45 (VLVI…AGVG), 57–77 (MTLV…LLAA), 104–124 (LVVT…IGAL), 133–153 (WFFG…LGFS), and 169–189 (ILDA…LVTS).

It belongs to the LysE/ArgO transporter (TC 2.A.75) family.

It localises to the cell membrane. This Mycobacterium bovis (strain ATCC BAA-935 / AF2122/97) protein is Putative amino-acid transporter Mb0498.